The following is a 472-amino-acid chain: Glutamate--tRNA ligase (472 aa).

Residues 10–20 carry the 'HIGH' region motif; sequence PSPTGYLHVGG. The Zn(2+) site is built by C99, C101, C126, and D128. The short motif at 238–242 is the 'KMSKS' region element; sequence KLSKR. K241 provides a ligand contact to ATP.

This sequence belongs to the class-I aminoacyl-tRNA synthetase family. Glutamate--tRNA ligase type 1 subfamily. Monomer. Requires Zn(2+) as cofactor.

It is found in the cytoplasm. It carries out the reaction tRNA(Glu) + L-glutamate + ATP = L-glutamyl-tRNA(Glu) + AMP + diphosphate. Its function is as follows. Catalyzes the attachment of glutamate to tRNA(Glu) in a two-step reaction: glutamate is first activated by ATP to form Glu-AMP and then transferred to the acceptor end of tRNA(Glu). The polypeptide is Glutamate--tRNA ligase (Photorhabdus laumondii subsp. laumondii (strain DSM 15139 / CIP 105565 / TT01) (Photorhabdus luminescens subsp. laumondii)).